The chain runs to 103 residues: Alpha-ketoglutarate dehydrogenase component 4 (103 aa).

Met1 carries the N-acetylmethionine modification. The residue at position 5 (Lys5) is an N6-succinyllysine. Residues 23–70 form a disordered region; it reads IRFPDRRDNPKPNVSEVLRSAGLPSHTSSISQHSKGSKSPDWLMHQGP. Over residues 47–61 the composition is skewed to low complexity; that stretch reads SHTSSISQHSKGSKS. 2 positions are modified to phosphoserine: Ser61 and Ser90.

The protein belongs to the alpha-ketoglutarate dehydrogenase component 4 family. Component of the 2-oxoglutarate dehydrogenase complex (OGDHC), composed of OGDH (2-oxoglutarate dehydrogenase; also called E1 subunit), DLST (dihydrolipoamide succinyltransferase; also called E2 subunit) and DLD (dihydrolipoamide dehydrogenase; also called E3 subunit), and the assembly factor KGD4. Within OGDHC complex, interacts (via N-terminus) with E3 subunit and (via C-terminus) with E2 subunit.

It localises to the mitochondrion. Molecular adapter that is necessary to form a stable 2-oxoglutarate dehydrogenase enzyme complex (OGDHC). Enables the specific recruitment of E3 subunit to E2 subunit in the 2-oxoglutarate dehydrogenase complex (OGDHC). In Bos taurus (Bovine), this protein is Alpha-ketoglutarate dehydrogenase component 4 (KGD4).